A 520-amino-acid polypeptide reads, in one-letter code: GMP synthase [glutamine-hydrolyzing] (520 aa).

A Glutamine amidotransferase type-1 domain is found at 13-205 (KIIVLDYGSQ…ALNICKAKGD (193 aa)). Cysteine 90 acts as the Nucleophile in catalysis. Active-site residues include histidine 179 and glutamate 181. One can recognise a GMPS ATP-PPase domain in the interval 206–395 (WSMDNFIDMQ…LGMPDHIVWR (190 aa)). Residue 233–239 (SGGVDSS) participates in ATP binding.

In terms of assembly, homodimer.

It carries out the reaction XMP + L-glutamine + ATP + H2O = GMP + L-glutamate + AMP + diphosphate + 2 H(+). It participates in purine metabolism; GMP biosynthesis; GMP from XMP (L-Gln route): step 1/1. Its function is as follows. Catalyzes the synthesis of GMP from XMP. This Streptococcus pneumoniae (strain CGSP14) protein is GMP synthase [glutamine-hydrolyzing].